We begin with the raw amino-acid sequence, 347 residues long: MSALTPASEVILRHSDEFIARHVLFAGDLQDALPAQFDAAGVRVHTNQYHHWQLLSNTLEENVQFGLLATAETLAACDTLIYYWPKSKQEAQFQLANLLSILPVGTDIFVVGENRSGVRSAEEMLADFAQLAKIDSARRCGLYHGRLDKQPEFDADAWWESYQVGGVTVKTLPGVFSRDSLDSGSHLLLSTFNEPFKGSVLDVGCGAGVLASVLAQQSPKIKWTLSDVSAAAIEASRATLAVNNIEAQVIASNVYSDIKGRFEMIISNPPFHDGIQTSLTAAEMLIRGATAHLHVGGKLRIVANSFLPYPALLDAAFGSHEVLAQNGRFKVYQATVGRPPRDPKKKR.

Belongs to the methyltransferase superfamily. RsmC family. In terms of assembly, monomer.

The protein localises to the cytoplasm. The catalysed reaction is guanosine(1207) in 16S rRNA + S-adenosyl-L-methionine = N(2)-methylguanosine(1207) in 16S rRNA + S-adenosyl-L-homocysteine + H(+). Specifically methylates the guanine in position 1207 of 16S rRNA in the 30S particle. This is Ribosomal RNA small subunit methyltransferase C from Yersinia pseudotuberculosis serotype O:1b (strain IP 31758).